The chain runs to 393 residues: Lipid-A-disaccharide synthase (393 aa).

It belongs to the LpxB family.

The enzyme catalyses a lipid X + a UDP-2-N,3-O-bis[(3R)-3-hydroxyacyl]-alpha-D-glucosamine = a lipid A disaccharide + UDP + H(+). The protein operates within bacterial outer membrane biogenesis; LPS lipid A biosynthesis. Condensation of UDP-2,3-diacylglucosamine and 2,3-diacylglucosamine-1-phosphate to form lipid A disaccharide, a precursor of lipid A, a phosphorylated glycolipid that anchors the lipopolysaccharide to the outer membrane of the cell. In Rhodopseudomonas palustris (strain ATCC BAA-98 / CGA009), this protein is Lipid-A-disaccharide synthase.